A 358-amino-acid polypeptide reads, in one-letter code: Protein Wnt-8b (358 aa).

The signal sequence occupies residues 1–23 (MFMHLEVYYYAFILMAHMKTCCG). Cys55 and Cys66 form a disulfide bridge. Asn104 carries N-linked (GlcNAc...) asparagine glycosylation. 10 disulfide bridges follow: Cys105–Cys113, Cys115–Cys133, Cys181–Cys195, Cys183–Cys190, Cys257–Cys295, Cys273–Cys288, Cys292–Cys334, Cys310–Cys325, Cys312–Cys322, and Cys317–Cys318. Ser187 carries the O-palmitoleoyl serine lipid modification. Asn260 and Asn279 each carry an N-linked (GlcNAc...) asparagine glycan. Residue Asn345 is glycosylated (N-linked (GlcNAc...) asparagine).

The protein belongs to the Wnt family. Palmitoleoylation is required for efficient binding to frizzled receptors. Depalmitoleoylation leads to Wnt signaling pathway inhibition. Post-translationally, proteolytic processing by tiki1 and tiki2 promotes oxidation and formation of large disulfide-bond oligomers, leading to inactivation of wnt8b. As to expression, hindbrain r1, 2 and 5.

Its subcellular location is the secreted. It localises to the extracellular space. It is found in the extracellular matrix. Ligand for fzd8a, a member of the G-protein coupled frizzled receptor family. May play a role in the establishment of polarity in the nervous system. Involved in canonical Wnt signaling pathway. During embryonic development, required for the acquisition of caudal diencephalic fate. Antagonizes eye specification. This Danio rerio (Zebrafish) protein is Protein Wnt-8b (wnt8b).